The primary structure comprises 525 residues: CTP synthase (525 aa).

Residues 1 to 269 are amidoligase domain; the sequence is MKYIIVTGGV…ADAITTHLHL (269 aa). Residue serine 12 participates in CTP binding. Position 12 (serine 12) interacts with UTP. ATP-binding positions include 13–18 and aspartate 70; that span reads GLGKGI. Residues aspartate 70 and glutamate 144 each coordinate Mg(2+). Residues 151 to 153, 190 to 195, and lysine 226 each bind CTP; these read DIE and KTKPTQ. UTP contacts are provided by residues 190 to 195 and lysine 226; that span reads KTKPTQ. In terms of domain architecture, Glutamine amidotransferase type-1 spans 292–524; sequence VAIVSKYGIE…VSACRKNKKT (233 aa). Glycine 348 lines the L-glutamine pocket. The Nucleophile; for glutamine hydrolysis role is filled by cysteine 375. L-glutamine-binding positions include 376-379, glutamate 399, and arginine 454; that span reads LGFQ. Residues histidine 497 and glutamate 499 contribute to the active site.

It belongs to the CTP synthase family. In terms of assembly, homotetramer.

It catalyses the reaction UTP + L-glutamine + ATP + H2O = CTP + L-glutamate + ADP + phosphate + 2 H(+). The enzyme catalyses L-glutamine + H2O = L-glutamate + NH4(+). It carries out the reaction UTP + NH4(+) + ATP = CTP + ADP + phosphate + 2 H(+). It participates in pyrimidine metabolism; CTP biosynthesis via de novo pathway; CTP from UDP: step 2/2. Its activity is regulated as follows. Allosterically activated by GTP, when glutamine is the substrate; GTP has no effect on the reaction when ammonia is the substrate. The allosteric effector GTP functions by stabilizing the protein conformation that binds the tetrahedral intermediate(s) formed during glutamine hydrolysis. Inhibited by the product CTP, via allosteric rather than competitive inhibition. In terms of biological role, catalyzes the ATP-dependent amination of UTP to CTP with either L-glutamine or ammonia as the source of nitrogen. Regulates intracellular CTP levels through interactions with the four ribonucleotide triphosphates. The chain is CTP synthase from Methanosphaerula palustris (strain ATCC BAA-1556 / DSM 19958 / E1-9c).